Consider the following 873-residue polypeptide: Bifunctional heparan sulfate N-deacetylase/N-sulfotransferase 3 (873 aa).

The Cytoplasmic segment spans residues 1–13; that stretch reads MSFIMKLHRHFQR. A helical; Signal-anchor for type II membrane protein membrane pass occupies residues 14 to 34; it reads TVILLATFCMVSIIISAYYLY. Residues 35-873 lie on the Lumenal side of the membrane; that stretch reads SGYKQENELS…WLRQELQKVR (839 aa). Residues 36 to 589 form a heparan sulfate N-deacetylase 3 region; the sequence is GYKQENELSE…KRHRDIWSKE (554 aa). N146, N226, N342, and N392 each carry an N-linked (GlcNAc...) asparagine glycan. Residues 590-873 form a heparan sulfate N-sulfotransferase 3 region; that stretch reads KTCDRLPKFL…WLRQELQKVR (284 aa). K605 functions as the For sulfotransferase activity in the catalytic mechanism. Position 605 to 609 (605 to 609) interacts with 3'-phosphoadenylyl sulfate; it reads KTGTT. N-linked (GlcNAc...) asparagine glycosylation is present at N658. S703 is a 3'-phosphoadenylyl sulfate binding site. Residue N794 is glycosylated (N-linked (GlcNAc...) asparagine). A disulfide bond links C809 and C819. 824–828 lines the 3'-phosphoadenylyl sulfate pocket; that stretch reads KGRKY.

Belongs to the sulfotransferase 1 family. NDST subfamily. In terms of assembly, monomer. In terms of tissue distribution, expressed in brain, kidney, liver, fetal and adult lung, adult pancreas, placenta, fetal spleen and fetal thymus. Not detected in adult/ fetal heart and skeletal muscle.

It localises to the golgi apparatus membrane. It carries out the reaction alpha-D-glucosaminyl-[heparan sulfate](n) + 3'-phosphoadenylyl sulfate = N-sulfo-alpha-D-glucosaminyl-[heparan sulfate](n) + adenosine 3',5'-bisphosphate + 2 H(+). The protein operates within glycan metabolism; heparan sulfate biosynthesis. It functions in the pathway glycan metabolism; heparin biosynthesis. In terms of biological role, essential bifunctional enzyme that catalyzes both the N-deacetylation and the N-sulfation of glucosamine (GlcNAc) of the glycosaminoglycan in heparan sulfate. Modifies the GlcNAc-GlcA disaccharide repeating sugar backbone to make N-sulfated heparosan, a prerequisite substrate for later modifications in heparin biosynthesis. Has high deacetylase activity but low sulfotransferase activity. In Homo sapiens (Human), this protein is Bifunctional heparan sulfate N-deacetylase/N-sulfotransferase 3.